Here is a 116-residue protein sequence, read N- to C-terminus: Photosystem II reaction center Psb28 protein (116 aa).

It belongs to the Psb28 family. As to quaternary structure, part of the photosystem II complex.

It localises to the plastid. Its subcellular location is the chloroplast thylakoid membrane. The polypeptide is Photosystem II reaction center Psb28 protein (Guillardia theta (Cryptophyte)).